The following is a 156-amino-acid chain: Transcription elongation factor GreA (156 aa).

Positions 8 to 75 form a coiled coil; that stretch reads LTKEGYEKLK…ELENMLSKAE (68 aa).

The protein belongs to the GreA/GreB family.

In terms of biological role, necessary for efficient RNA polymerase transcription elongation past template-encoded arresting sites. The arresting sites in DNA have the property of trapping a certain fraction of elongating RNA polymerases that pass through, resulting in locked ternary complexes. Cleavage of the nascent transcript by cleavage factors such as GreA or GreB allows the resumption of elongation from the new 3'terminus. GreA releases sequences of 2 to 3 nucleotides. The chain is Transcription elongation factor GreA from Thermosipho melanesiensis (strain DSM 12029 / CIP 104789 / BI429).